Here is a 365-residue protein sequence, read N- to C-terminus: Transcription factor aptf-1 (365 aa).

2 disordered regions span residues Glu-13–Glu-40 and Thr-93–Ser-126. Positions Arg-223 to Asp-356 are H-S-H (helix-span-helix), dimerization.

Belongs to the AP-2 family. Binds DNA as a dimer. Expressed in five interneurons AIB, RIB and RIS.

It is found in the nucleus. Functionally, transcription factor, which is required in the single sleep-active ring interneuron RIS for sleep-like behavioral quiescence induced by neuropeptide signaling in larvae. Regulates gene expression of sleep-inducing FMRFamide-like neuropeptide flp-11 in RIS. The chain is Transcription factor aptf-1 from Caenorhabditis elegans.